We begin with the raw amino-acid sequence, 598 residues long: Elongation factor 4 (598 aa).

A tr-type G domain is found at 4-181 (KKIRNFAIIA…AIVNLIPPPQ (178 aa)). GTP contacts are provided by residues 16 to 21 (DHGKST) and 128 to 131 (NKID).

It belongs to the TRAFAC class translation factor GTPase superfamily. Classic translation factor GTPase family. LepA subfamily.

The protein resides in the cell membrane. The catalysed reaction is GTP + H2O = GDP + phosphate + H(+). Functionally, required for accurate and efficient protein synthesis under certain stress conditions. May act as a fidelity factor of the translation reaction, by catalyzing a one-codon backward translocation of tRNAs on improperly translocated ribosomes. Back-translocation proceeds from a post-translocation (POST) complex to a pre-translocation (PRE) complex, thus giving elongation factor G a second chance to translocate the tRNAs correctly. Binds to ribosomes in a GTP-dependent manner. This chain is Elongation factor 4, found in Mesomycoplasma hyopneumoniae (strain 232) (Mycoplasma hyopneumoniae).